The primary structure comprises 370 residues: Subtilisin-like protease (370 aa).

Positions 1-17 (MIASIVFFIVLVDGVAT) are cleaved as a signal peptide. Active-site charge relay system residues include Asp-13, His-35, and Ser-190. The Peptidase S8 domain occupies 18–261 (GSPNALVTDF…FGEVSPSRLE (244 aa)). In terms of domain architecture, P/Homo B spans 240–370 (RVTDRWTHRN…TTEGTCHGIR (131 aa)).

The protein belongs to the peptidase S8 family.

This Ictalurid herpesvirus 1 (strain Auburn) (IcHV-1) protein is Subtilisin-like protease (ORF47).